Consider the following 328-residue polypeptide: Malate dehydrogenase (328 aa).

12 to 18 (GAAGQIG) contributes to the NAD(+) binding site. Substrate is bound by residues Arg95 and Arg101. NAD(+)-binding positions include Asn108, Gln115, and 132–134 (VGN). The substrate site is built by Asn134 and Arg165. Catalysis depends on His190, which acts as the Proton acceptor.

The protein belongs to the LDH/MDH superfamily. MDH type 2 family.

It carries out the reaction (S)-malate + NAD(+) = oxaloacetate + NADH + H(+). In terms of biological role, catalyzes the reversible oxidation of malate to oxaloacetate. This Paracidovorax citrulli (strain AAC00-1) (Acidovorax citrulli) protein is Malate dehydrogenase.